A 1129-amino-acid chain; its full sequence is MAFVPVIPESYSHVLAEFESLDPLLSALRLDSSRLKCTSIAVSRKWLALGSSGGGLHLIQKEGWKHRLFLSHREGAISQVACCLHDDDYVAVATSQGLVVVWELNQERRGKPEQMYVSSEHKGRRVTALCWDTAILRVFVGDHAGKVSAIKLNTSKQAKAAAAFVMFPVQTITTVDSCVVQLDYLDGRLLISSLTRSFLCDTEREKFWKIGNKERDGEYGACFFPGRCSGGQQPLIYCARPGSRMWEVNFDGEVISTHQFKKLLSLPPLPVITLRSEPQYDHTAGSSQSLSFPKLLHLSEHCVLTWTERGIYIFIPQNVQVLLWSEVKDIQDVAVCRNELFCLHLNGKVSHLSLISVERCVERLLRRGLWNLAARTCCLFQNSVIASRARKTLTADKLEHLKSQLDHGTYNDLISQLEELILKFEPLDSACSSRRSSISSHESFSILDSGIYRIISSRRGSQSDEDSCSLHSQTLSEDERFKEFTSQQEEDLPDQCCGSHGNEDNVSHAPVMFETDKNETFLPFGIPLPFRSPSPLVSLQAVKESVSSFVRKTTEKIGTLHTSPDLKVRPELRGDEQSCEEDVSSDTCPKEEDTEEEKEVTSPPPEEDRFQELKVATAEAMTKLQDPLVLFESESLRMVLQEWLSHLEKTFAMKDFSGVSDTDNSSMKLNQDVLLVNESKKGILDEDNEKEKRDSLGNEESVDKTACECVRSPRESLDDLFQICSPCAIASGLRNDLAELTTLCLELNVLNSKIKSTSGHVDHTLQQYSPEILACQFLKKYFFLLNLKRAKESIKLSYSNSPSVWDTFIEGLKEMASSNPVYMEMEKGDLPTRLKLLDDEVPFDSPLLVVYATRLYEKFGESALRSLIKFFPSILPSDIIQLCHHHPAEFLAYLDSLVKSRPEDQRSSFLESLLQPESLRLDWLLLAVSLDAPPSTSTMDDEGYPRPHSHLLSWGYSQLILHLIKLPADFITKEKMTDICRSCGFWPGYLILCLELERRREAFTNIVYLNDMSLMEGDNGWIPETVEEWKLLLHLIQSKSTRPAPQESLNGSLSDGPSPINVENVALLLAKAMGPDRAWSLLQECGLALELSEKFTRTCDILRIAEKRQRALIQSMLEKCDRFLWSQQA.

Positions 483–503 (EFTSQQEEDLPDQCCGSHGNE) are disordered. Ser532 and Ser534 each carry phosphoserine. The disordered stretch occupies residues 561-609 (HTSPDLKVRPELRGDEQSCEEDVSSDTCPKEEDTEEEKEVTSPPPEEDR). Residues 564–576 (PDLKVRPELRGDE) show a composition bias toward basic and acidic residues. The residue at position 695 (Ser695) is a Phosphoserine.

Belongs to the HPS5 family. Component of the biogenesis of lysosome-related organelles complex-2 (or BLOC2) composed of HPS3, HPS5 and HPS6. Interacts with HPS6. Interacts with HPS3. May interact with all alpha-integrin chains that have an aromatic residue before the first lysine of the conserved KXGFFKR motif, including ITGA2, ITGA3, ITGA5 and ITGA6. In terms of tissue distribution, widely expressed. Isoform 1:Highly expressed in lungs and testis. Isoform 2:Highly expressed in placenta, kidney, testis ovary, lung and thymus.

The protein resides in the cytoplasm. The protein localises to the cytosol. In terms of biological role, may regulate the synthesis and function of lysosomes and of highly specialized organelles, such as melanosomes and platelet dense granules. Regulates intracellular vesicular trafficking in fibroblasts. May be involved in the regulation of general functions of integrins. The sequence is that of BLOC-2 complex member HPS5 (HPS5) from Homo sapiens (Human).